The chain runs to 302 residues: uncharacterized protein (302 aa).

The next 10 helical transmembrane spans lie at 13-32 (GILLAISAYTMWGIAPIYFK), 42-64 (ILSHRVVWSFVLLAVLIHLGRRW), 77-96 (FWLLLVTALLVGGNWLIFIW), 106-125 (ASLGYYINPLLNVLLGMLFL), 132-150 (LQWFAVALAAIGVGIQLVV), 154-171 (VPIVAIALATSFGFYGLL), 183-202 (LFLETLFMLPAAAIYLIWLA), 217-239 (NLLLVCAGVVTTLPLLCFTGAAA), 246-265 (LGFFQYIGPSLMFLLAVLVY), and 275-297 (ITFAFIWSALVIFSVDGLKAGHA). The region spanning 22-149 (TMWGIAPIYF…AAIGVGIQLV (128 aa)) is the EamA domain.

This sequence belongs to the EamA transporter family.

It localises to the cell membrane. This is an uncharacterized protein from Vibrio cholerae serotype O1 (strain ATCC 39315 / El Tor Inaba N16961).